A 900-amino-acid chain; its full sequence is Bifunctional uridylyltransferase/uridylyl-removing enzyme (900 aa).

Residues 1-342 (MPQVDPELFD…PCEQPVQIQP (342 aa)) are uridylyltransferase. The segment at 343 to 705 (LNSRFQLRDG…TTQREFESGS (363 aa)) is uridylyl-removing. The region spanning 461 to 583 (VDAHTLNLIK…VGDQTHLDYL (123 aa)) is the HD domain. ACT domains follow at residues 706 to 789 (QIFI…IIQR) and 816 to 891 (VLEV…DNGR).

The protein belongs to the GlnD family. The cofactor is Mg(2+).

It carries out the reaction [protein-PII]-L-tyrosine + UTP = [protein-PII]-uridylyl-L-tyrosine + diphosphate. The enzyme catalyses [protein-PII]-uridylyl-L-tyrosine + H2O = [protein-PII]-L-tyrosine + UMP + H(+). Uridylyltransferase (UTase) activity is inhibited by glutamine, while glutamine activates uridylyl-removing (UR) activity. Its function is as follows. Modifies, by uridylylation and deuridylylation, the PII regulatory proteins (GlnB and homologs), in response to the nitrogen status of the cell that GlnD senses through the glutamine level. Under low glutamine levels, catalyzes the conversion of the PII proteins and UTP to PII-UMP and PPi, while under higher glutamine levels, GlnD hydrolyzes PII-UMP to PII and UMP (deuridylylation). Thus, controls uridylylation state and activity of the PII proteins, and plays an important role in the regulation of nitrogen assimilation and metabolism. The polypeptide is Bifunctional uridylyltransferase/uridylyl-removing enzyme (Pseudomonas aeruginosa (strain ATCC 15692 / DSM 22644 / CIP 104116 / JCM 14847 / LMG 12228 / 1C / PRS 101 / PAO1)).